We begin with the raw amino-acid sequence, 114 residues long: Fluoride-specific ion channel FluC 2 (114 aa).

The next 4 helical transmembrane spans lie at 3–23, 31–51, 57–77, and 92–112; these read YVIIGGAVGACLRFAVSECWL, LMTAVFVINISGCAMLGWILA, GIELLFISMLGGFTTFSTFCM, and MIYLVISIVGSLFGFLFGWNV. Positions 67 and 70 each coordinate Na(+).

The protein belongs to the fluoride channel Fluc/FEX (TC 1.A.43) family.

The protein resides in the cell membrane. It carries out the reaction fluoride(in) = fluoride(out). Na(+) is not transported, but it plays an essential structural role and its presence is essential for fluoride channel function. Its function is as follows. Fluoride-specific ion channel. Important for reducing fluoride concentration in the cell, thus reducing its toxicity. This chain is Fluoride-specific ion channel FluC 2, found in Shouchella clausii (strain KSM-K16) (Alkalihalobacillus clausii).